Here is a 185-residue protein sequence, read N- to C-terminus: Elongation factor P (185 aa).

This sequence belongs to the elongation factor P family.

The protein localises to the cytoplasm. The protein operates within protein biosynthesis; polypeptide chain elongation. Functionally, involved in peptide bond synthesis. Stimulates efficient translation and peptide-bond synthesis on native or reconstituted 70S ribosomes in vitro. Probably functions indirectly by altering the affinity of the ribosome for aminoacyl-tRNA, thus increasing their reactivity as acceptors for peptidyl transferase. The polypeptide is Elongation factor P (Clostridium kluyveri (strain ATCC 8527 / DSM 555 / NBRC 12016 / NCIMB 10680 / K1)).